A 45-amino-acid polypeptide reads, in one-letter code: Large ribosomal subunit protein bL36 (45 aa).

The protein belongs to the bacterial ribosomal protein bL36 family.

The protein is Large ribosomal subunit protein bL36 of Psychrobacter sp. (strain PRwf-1).